Consider the following 173-residue polypeptide: Alpha-crystallin A chain (173 aa).

N-acetylmethionine is present on M1. The tract at residues 1 to 63 (MDVTIQHPWF…RTVLDSGISE (63 aa)) is required for complex formation with BFSP1 and BFSP2. Deamidated glutamine; partial is present on Q6. S45 is subject to Phosphoserine. Q50 bears the Deamidated glutamine; partial mark. Residues 52 to 162 (LFRTVLDSGI…GHSERAIPVS (111 aa)) enclose the sHSP domain. K70 is modified (N6-acetyllysine). Q90 is modified (deamidated glutamine; partial). K99 is subject to N6-acetyllysine. Residue H100 participates in Zn(2+) binding. Deamidated asparagine; partial is present on N101. The Zn(2+) site is built by E102 and H107. S122 carries the post-translational modification Phosphoserine. N123 bears the Deamidated asparagine; partial mark. The interval 145–173 (KVQSGLDAGHSERAIPVSREEKPSSAPSS) is disordered. The residue at position 147 (Q147) is a Deamidated glutamine; partial. Residues 153 to 167 (GHSERAIPVSREEKP) are compositionally biased toward basic and acidic residues. Residue H154 coordinates Zn(2+). The O-linked (GlcNAc) serine glycan is linked to S162.

It belongs to the small heat shock protein (HSP20) family. In terms of assembly, heteromer composed of three CRYAA and one CRYAB subunits. Inter-subunit bridging via zinc ions enhances stability, which is crucial as there is no protein turn over in the lens. Can also form homodimers and homotetramers (dimers of dimers) which serve as the building blocks of homooligomers. Within homooligomers, the zinc-binding motif is created from residues of 3 different molecules. His-100 and Glu-102 from one molecule are ligands of the zinc ion, and His-107 and His-154 residues from additional molecules complete the site with tetrahedral coordination geometry. Part of a complex required for lens intermediate filament formation composed of BFSP1, BFSP2 and CRYAA. Acetylation at Lys-70 may increase chaperone activity. Post-translationally, undergoes age-dependent proteolytical cleavage at the C-terminus.

The protein localises to the cytoplasm. Its subcellular location is the nucleus. Its function is as follows. Contributes to the transparency and refractive index of the lens. Acts as a chaperone, preventing aggregation of various proteins under a wide range of stress conditions. Required for the correct formation of lens intermediate filaments as part of a complex composed of BFSP1, BFSP2 and CRYAA. In Cavia porcellus (Guinea pig), this protein is Alpha-crystallin A chain (CRYAA).